The sequence spans 560 residues: Oxygen-dependent choline dehydrogenase (560 aa).

An FAD-binding site is contributed by Asp-6–Glu-35. His-472 (proton acceptor) is an active-site residue.

The protein belongs to the GMC oxidoreductase family. The cofactor is FAD.

The catalysed reaction is choline + A = betaine aldehyde + AH2. It carries out the reaction betaine aldehyde + NAD(+) + H2O = glycine betaine + NADH + 2 H(+). It participates in amine and polyamine biosynthesis; betaine biosynthesis via choline pathway; betaine aldehyde from choline (cytochrome c reductase route): step 1/1. In terms of biological role, involved in the biosynthesis of the osmoprotectant glycine betaine. Catalyzes the oxidation of choline to betaine aldehyde and betaine aldehyde to glycine betaine at the same rate. In Staphylococcus saprophyticus subsp. saprophyticus (strain ATCC 15305 / DSM 20229 / NCIMB 8711 / NCTC 7292 / S-41), this protein is Oxygen-dependent choline dehydrogenase.